Reading from the N-terminus, the 994-residue chain is Glutamate [NMDA] receptor subunit 1 (994 aa).

Positions Met1 to Ala23 are cleaved as a signal peptide. The Extracellular segment spans residues Ala24 to Ser570. Asn255, Asn311, Asn342, Asn394, Asn451, Asn478, and Asn498 each carry an N-linked (GlcNAc...) asparagine glycan. Residues Pro527–Thr529 and Arg534 contribute to the glycine site. A helical transmembrane segment spans residues Asn571–Leu591. Residues Asp592 to Trp648 are Cytoplasmic-facing. A helical transmembrane segment spans residues Ala649–Leu669. Topologically, residues Glu670 to Asn828 are extracellular. An N-linked (GlcNAc...) asparagine glycan is attached at Asn690. Glycine is bound by residues Ser700 and Asp744. The helical transmembrane segment at Met829–Ile849 threads the bilayer. Residues Glu850–Val994 lie on the Cytoplasmic side of the membrane. The disordered stretch occupies residues Arg971–Val994. Over residues Gly984–Val994 the composition is skewed to polar residues.

Belongs to the glutamate-gated ion channel (TC 1.A.10.1) family. In terms of assembly, forms a heteromeric NMDA channel with Nmdar2.

It is found in the cell membrane. It localises to the postsynaptic cell membrane. Its subcellular location is the postsynaptic density. Its function is as follows. NMDA receptor subtype of glutamate-gated ion channels with high calcium permeability and voltage-dependent sensitivity to magnesium. Mediated by glycine. This protein plays a key role in synaptic plasticity, synaptogenesis, excitotoxicity, memory acquisition and learning. It mediates neuronal functions in glutamate neurotransmission. Is involved in the cell surface targeting of NMDA receptors. Plays a role in associative learning and in long-term memory consolidation. The chain is Glutamate [NMDA] receptor subunit 1 from Drosophila ananassae (Fruit fly).